The primary structure comprises 1033 residues: Phospholipid-transporting ATPase neo1 (1033 aa).

4 consecutive transmembrane segments (helical) span residues 133 to 153 (LKIGYLSTYIAPLIFVLLITL), 274 to 294 (TLWANTVLASDGVYGVVVYTG), 317 to 337 (INFYSKILCTFVLVLSIGLTF), and 344 to 364 (DWYISVFRYLILFSSIIPINL). Asp-408 (4-aspartylphosphate intermediate) is an active-site residue. Residues Asp-408, Lys-409, Thr-410, Glu-491, Phe-528, Ser-530, Lys-533, Lys-551, Arg-580, Thr-581, Thr-662, Gly-663, Asp-664, Arg-744, and Lys-750 each contribute to the ATP site. Asp-408 serves as a coordination point for Mg(2+). Thr-410 lines the Mg(2+) pocket. Transmembrane regions (helical) follow at residues 768-788 (IGDGGNDVGMIQVANVGIGIV), 843-863 (VVYSVISAFEPIALFQGLLLV), 913-933 (VLISVYQGLIIQLFTFYLIGF), 939-959 (MLAVCFSCLIFNELIMVALQI), 965-985 (TIVMSELLTLMMYILSVPFLT), and 992-1012 (FLLGLKFYWVSALILFISLLP). Asp-770 contributes to the Mg(2+) binding site. Positions 773 and 774 each coordinate ATP. Residue Asp-774 coordinates Mg(2+).

Belongs to the cation transport ATPase (P-type) (TC 3.A.3) family. Type IV subfamily. As to quaternary structure, functions without a CDC50/LEM3 family accessory subunit. The cofactor is Mg(2+).

The protein localises to the endosome membrane. Its subcellular location is the golgi apparatus membrane. The enzyme catalyses ATP + H2O + phospholipidSide 1 = ADP + phosphate + phospholipidSide 2.. It carries out the reaction a 1,2-diacyl-sn-glycero-3-phospho-L-serine(out) + ATP + H2O = a 1,2-diacyl-sn-glycero-3-phospho-L-serine(in) + ADP + phosphate + H(+). It catalyses the reaction a 1,2-diacyl-sn-glycero-3-phosphoethanolamine(out) + ATP + H2O = a 1,2-diacyl-sn-glycero-3-phosphoethanolamine(in) + ADP + phosphate + H(+). Functionally, flippase that catalyzes the hydrolysis of ATP coupled to the transport of lysophosphatidylserine, phosphatidylethanolamine, and phosphatidylserine from the lumenal to the cytosolic leaflet of the Golgi apparatus membrane and ensures the maintenance of asymmetric distribution of phospholipids. The sequence is that of Phospholipid-transporting ATPase neo1 from Schizosaccharomyces pombe (strain 972 / ATCC 24843) (Fission yeast).